Consider the following 247-residue polypeptide: Probable transcriptional regulatory protein YebC (247 aa).

Residues 1 to 20 (MAGHSKWANTRHRKAAQDAK) form a disordered region.

The protein belongs to the TACO1 family.

The protein localises to the cytoplasm. This Salmonella arizonae (strain ATCC BAA-731 / CDC346-86 / RSK2980) protein is Probable transcriptional regulatory protein YebC.